Here is a 105-residue protein sequence, read N- to C-terminus: UPF0235 protein RP839 (105 aa).

This sequence belongs to the UPF0235 family.

The sequence is that of UPF0235 protein RP839 from Rickettsia prowazekii (strain Madrid E).